The sequence spans 447 residues: MNAWEVNFDGLVGLTHHYAGLSFGNEASTCHRFQVSNPRQAAKQGLLKMKALADAGFPQAVIPPHERPFIPVLRQLGFSGSDEQVLEKVARQAPHWLSSVSSASPMWVANAATIAPSADTLDGKVHLTVANLNNKFHRSLEAHVTESLLKAIFNDKEKFSVHSALPQVALLGDEGAANHNRLGGHYGEPGMQLFVYGREEGNDTRPSRYPARQTREASEAVARLNQVNPQQVIFAQQNPDVIDQGVFHNDVIAVSNRQVLFCHQQAFARQSQLLANLRARVNGFMAIEVPATQVSVSDAVSTYLFNSQLLSRDDGSMMLVLPQECREHAGVWGYLNELLAADNPISELKVFDLRESMANGGGPACLRLRVVLTEEERRAVNPAVMMNDTLFNALNDWVDRYYRDRLTAADLADPQLLRGGREALDILSQLLNLGSVYPFQREGGGNG.

Substrate contacts are provided by residues 19–28 (AGLSFGNEAS), Asn-110, and 137–138 (HR). Glu-174 is an active-site residue. Substrate is bound at residue Arg-212. His-248 is an active-site residue. Asp-250 and Asn-359 together coordinate substrate. Cys-365 acts as the Nucleophile in catalysis.

Belongs to the succinylarginine dihydrolase family. Homodimer.

The catalysed reaction is N(2)-succinyl-L-arginine + 2 H2O + 2 H(+) = N(2)-succinyl-L-ornithine + 2 NH4(+) + CO2. It participates in amino-acid degradation; L-arginine degradation via AST pathway; L-glutamate and succinate from L-arginine: step 2/5. In terms of biological role, catalyzes the hydrolysis of N(2)-succinylarginine into N(2)-succinylornithine, ammonia and CO(2). This is N-succinylarginine dihydrolase from Escherichia coli O139:H28 (strain E24377A / ETEC).